The primary structure comprises 353 residues: Nicotinate-nucleotide--dimethylbenzimidazole phosphoribosyltransferase (353 aa).

Glu-318 (proton acceptor) is an active-site residue.

Belongs to the CobT family.

It carries out the reaction 5,6-dimethylbenzimidazole + nicotinate beta-D-ribonucleotide = alpha-ribazole 5'-phosphate + nicotinate + H(+). It participates in nucleoside biosynthesis; alpha-ribazole biosynthesis; alpha-ribazole from 5,6-dimethylbenzimidazole: step 1/2. In terms of biological role, catalyzes the synthesis of alpha-ribazole-5'-phosphate from nicotinate mononucleotide (NAMN) and 5,6-dimethylbenzimidazole (DMB). In Geobacter metallireducens (strain ATCC 53774 / DSM 7210 / GS-15), this protein is Nicotinate-nucleotide--dimethylbenzimidazole phosphoribosyltransferase.